The sequence spans 392 residues: S-adenosylmethionine synthase (392 aa).

An ATP-binding site is contributed by His22. Asp24 serves as a coordination point for Mg(2+). Position 50 (Glu50) interacts with K(+). L-methionine-binding residues include Glu63 and Gln106. The tract at residues 106-116 (QSPDITQGVTL) is flexible loop. ATP-binding positions include 170 to 172 (DGK), 236 to 237 (KF), Asp245, 251 to 252 (RK), Ala268, and Lys272. Asp245 is an L-methionine binding site. Position 276 (Lys276) interacts with L-methionine.

Belongs to the AdoMet synthase family. As to quaternary structure, homotetramer; dimer of dimers. Mg(2+) is required as a cofactor. K(+) serves as cofactor.

It is found in the cytoplasm. It carries out the reaction L-methionine + ATP + H2O = S-adenosyl-L-methionine + phosphate + diphosphate. It functions in the pathway amino-acid biosynthesis; S-adenosyl-L-methionine biosynthesis; S-adenosyl-L-methionine from L-methionine: step 1/1. Catalyzes the formation of S-adenosylmethionine (AdoMet) from methionine and ATP. The overall synthetic reaction is composed of two sequential steps, AdoMet formation and the subsequent tripolyphosphate hydrolysis which occurs prior to release of AdoMet from the enzyme. This chain is S-adenosylmethionine synthase, found in Sulfurimonas denitrificans (strain ATCC 33889 / DSM 1251) (Thiomicrospira denitrificans (strain ATCC 33889 / DSM 1251)).